The primary structure comprises 219 residues: Dynein light chain Tctex-type 4 (219 aa).

The disordered stretch occupies residues 1-84 (MAGRPVPAGR…RRPSLGPVPP (84 aa)). A compositionally biased stretch (basic and acidic residues) spans 10 to 20 (RQEEELAKDPG). Ser64 bears the Phosphoserine mark.

Belongs to the dynein light chain Tctex-type family. Interacts with ENG/endoglin, TGFBR2 and TGFBR3. Interacts with PPP1CC.

It is found in the cell projection. It localises to the cilium. Its subcellular location is the flagellum. The protein resides in the cytoplasmic vesicle. The protein localises to the secretory vesicle. It is found in the acrosome. It localises to the cytoplasm. Its subcellular location is the cytoskeleton. The protein resides in the cilium axoneme. The protein localises to the nucleus. It is found in the microtubule organizing center. In Sus scrofa (Pig), this protein is Dynein light chain Tctex-type 4 (DYNLT4).